The primary structure comprises 597 residues: Elongation factor 4 (597 aa).

A tr-type G domain is found at 2-184 (KNIRNFSIIA…EIVAKIPAPT (183 aa)). GTP contacts are provided by residues 14–19 (DHGKST) and 131–134 (NKID).

Belongs to the TRAFAC class translation factor GTPase superfamily. Classic translation factor GTPase family. LepA subfamily.

It localises to the cell inner membrane. It catalyses the reaction GTP + H2O = GDP + phosphate + H(+). Its function is as follows. Required for accurate and efficient protein synthesis under certain stress conditions. May act as a fidelity factor of the translation reaction, by catalyzing a one-codon backward translocation of tRNAs on improperly translocated ribosomes. Back-translocation proceeds from a post-translocation (POST) complex to a pre-translocation (PRE) complex, thus giving elongation factor G a second chance to translocate the tRNAs correctly. Binds to ribosomes in a GTP-dependent manner. This Neisseria gonorrhoeae (strain ATCC 700825 / FA 1090) protein is Elongation factor 4.